The sequence spans 161 residues: Phosphopantetheine adenylyltransferase (161 aa).

Residue Ser-11 participates in substrate binding. Residues 11–12 and His-19 contribute to the ATP site; that span reads SF. The substrate site is built by Lys-43, Leu-75, and Arg-89. Residues 90–92, Glu-100, and 125–131 each bind ATP; these read GLR and YSFISSS.

This sequence belongs to the bacterial CoaD family. In terms of assembly, homohexamer. It depends on Mg(2+) as a cofactor.

It localises to the cytoplasm. The catalysed reaction is (R)-4'-phosphopantetheine + ATP + H(+) = 3'-dephospho-CoA + diphosphate. It participates in cofactor biosynthesis; coenzyme A biosynthesis; CoA from (R)-pantothenate: step 4/5. Its function is as follows. Reversibly transfers an adenylyl group from ATP to 4'-phosphopantetheine, yielding dephospho-CoA (dPCoA) and pyrophosphate. This chain is Phosphopantetheine adenylyltransferase, found in Staphylococcus haemolyticus (strain JCSC1435).